A 418-amino-acid chain; its full sequence is Tyrosine--tRNA ligase (418 aa).

Y34 lines the L-tyrosine pocket. The 'HIGH' region signature appears at 39–48; the sequence is PTADSLHLGH. L-tyrosine is bound by residues Y169 and Q173. The short motif at 229-233 is the 'KMSKS' region element; it reads KFGKS. ATP is bound at residue K232. Residues 352–418 form the S4 RNA-binding domain; the sequence is HNIVEILVAA…GKKKYAVLTY (67 aa).

Belongs to the class-I aminoacyl-tRNA synthetase family. TyrS type 1 subfamily. In terms of assembly, homodimer.

It localises to the cytoplasm. The enzyme catalyses tRNA(Tyr) + L-tyrosine + ATP = L-tyrosyl-tRNA(Tyr) + AMP + diphosphate + H(+). Its function is as follows. Catalyzes the attachment of tyrosine to tRNA(Tyr) in a two-step reaction: tyrosine is first activated by ATP to form Tyr-AMP and then transferred to the acceptor end of tRNA(Tyr). This is Tyrosine--tRNA ligase from Streptococcus pyogenes serotype M1.